The following is a 463-amino-acid chain: ATP-dependent protease ATPase subunit HslU (463 aa).

Residues isoleucine 19, 61-66, aspartate 277, glutamate 341, and arginine 413 each bind ATP; that span reads GVGKTE.

This sequence belongs to the ClpX chaperone family. HslU subfamily. In terms of assembly, a double ring-shaped homohexamer of HslV is capped on each side by a ring-shaped HslU homohexamer. The assembly of the HslU/HslV complex is dependent on binding of ATP.

The protein localises to the cytoplasm. ATPase subunit of a proteasome-like degradation complex; this subunit has chaperone activity. The binding of ATP and its subsequent hydrolysis by HslU are essential for unfolding of protein substrates subsequently hydrolyzed by HslV. HslU recognizes the N-terminal part of its protein substrates and unfolds these before they are guided to HslV for hydrolysis. The sequence is that of ATP-dependent protease ATPase subunit HslU from Bacillus cereus (strain ATCC 14579 / DSM 31 / CCUG 7414 / JCM 2152 / NBRC 15305 / NCIMB 9373 / NCTC 2599 / NRRL B-3711).